The sequence spans 56 residues: Arcadin-3 (56 aa).

Its subcellular location is the cytoplasm. It localises to the cytoskeleton. Functionally, part of an actin-like archaeal cytoskeleton. This is Arcadin-3 from Pyrobaculum calidifontis (strain DSM 21063 / JCM 11548 / VA1).